Reading from the N-terminus, the 323-residue chain is Aspartate carbamoyltransferase catalytic subunit (323 aa).

Positions 61 and 62 each coordinate carbamoyl phosphate. L-aspartate is bound at residue lysine 89. Carbamoyl phosphate contacts are provided by arginine 111, histidine 144, and glutamine 147. L-aspartate-binding residues include arginine 184 and arginine 238. Residues glycine 279 and proline 280 each contribute to the carbamoyl phosphate site.

Belongs to the aspartate/ornithine carbamoyltransferase superfamily. ATCase family. Heterododecamer (2C3:3R2) of six catalytic PyrB chains organized as two trimers (C3), and six regulatory PyrI chains organized as three dimers (R2).

It catalyses the reaction carbamoyl phosphate + L-aspartate = N-carbamoyl-L-aspartate + phosphate + H(+). The protein operates within pyrimidine metabolism; UMP biosynthesis via de novo pathway; (S)-dihydroorotate from bicarbonate: step 2/3. Catalyzes the condensation of carbamoyl phosphate and aspartate to form carbamoyl aspartate and inorganic phosphate, the committed step in the de novo pyrimidine nucleotide biosynthesis pathway. The polypeptide is Aspartate carbamoyltransferase catalytic subunit (Acaryochloris marina (strain MBIC 11017)).